A 3750-amino-acid chain; its full sequence is Cubilin homolog (3750 aa).

Residues M1–G28 form the signal peptide. N-linked (GlcNAc...) asparagine glycosylation is found at N51 and N123. The EGF-like 1 domain maps to E154–E190. 6 cysteine pairs are disulfide-bonded: C158-C169, C163-C178, C180-C189, C196-C212, C206-C221, and C223-C232. Positions D192–T233 constitute an EGF-like 2; calcium-binding domain. An EGF-like 3; calcium-binding domain is found at D282 to C308. Residues D324 to C352 form the EGF-like 4; calcium-binding domain. N424 carries N-linked (GlcNAc...) asparagine glycosylation. EGF-like domains are found at residues T426–E463 and Q465–E503. Intrachain disulfides connect C430–C441, C435–C451, C453–C462, C469–C480, C474–C491, C493–C502, and C509–C535. An N-linked (GlcNAc...) asparagine glycan is attached at N448. CUB domains lie at C509–M623, C627–E738, C744–A852, C853–L971, C978–E1095, C1100–F1212, C1216–N1331, C1332–Y1434, C1439–V1550, C1554–S1670, C1671–M1788, C1792–E1902, and H1903–L2001. N-linked (GlcNAc...) asparagine glycosylation is found at N542 and N548. C562 and C584 form a disulfide bridge. Residue N609 is glycosylated (N-linked (GlcNAc...) asparagine). 6 cysteine pairs are disulfide-bonded: C627/C654, C681/C701, C744/C770, C853/C879, C913/C933, and C978/C1004. An N-linked (GlcNAc...) asparagine glycan is attached at N871. Ca(2+) is bound by residues E1026, D1034, and D1080. An intrachain disulfide couples C1031 to C1058. A disulfide bond links C1100 and C1126. The N-linked (GlcNAc...) asparagine glycan is linked to N1119. Residue E1148 participates in Ca(2+) binding. A glycan (N-linked (GlcNAc...) asparagine) is linked at N1152. C1153 and C1175 are joined by a disulfide. Ca(2+) contacts are provided by D1156 and D1197. C1216 and C1242 are joined by a disulfide. Residues E1264, D1272, and D1316 each contribute to the Ca(2+) site. C1269 and C1292 are disulfide-bonded. C1332 and C1360 are oxidised to a cystine. N-linked (GlcNAc...) asparagine glycosylation is found at N1335, N1359, N1413, and N1424. A disulfide bridge links C1439 with C1465. N-linked (GlcNAc...) asparagine glycosylation occurs at N1491. 7 cysteine pairs are disulfide-bonded: C1492–C1513, C1554–C1580, C1607–C1631, C1671–C1697, C1733–C1755, C1792–C1818, and C1845–C1866. N1694 is a glycosylation site (N-linked (GlcNAc...) asparagine). N-linked (GlcNAc...) asparagine glycosylation is found at N1908 and N2009. Cystine bridges form between C2019–C2048 and C2077–C2100. CUB domains lie at C2019 to A2139, C2140 to E2256, D2262 to A2383, C2385 to L2512, and C2516 to V2646. N-linked (GlcNAc...) asparagine glycosylation is found at N2092, N2128, N2152, and N2231. Residues C2140 and C2167 are joined by a disulfide bond. Residues C2324 and C2346 are joined by a disulfide bond. An N-linked (GlcNAc...) asparagine glycan is attached at N2377. Residues C2385 and C2416 are joined by a disulfide bond. N-linked (GlcNAc...) asparagine glycosylation is present at N2442. 2 disulfide bridges follow: C2445–C2474 and C2516–C2542. Residues N2655, N2671, N2682, and N2772 are each glycosylated (N-linked (GlcNAc...) asparagine). Intrachain disulfides connect C2761–C2790 and C2837–C2859. CUB domains are found at residues C2761–G2895, C2898–N3010, C3011–R3128, C3130–M3246, C3249–I3364, C3368–N3512, L3522–S3615, and C3623–V3736. 2 N-linked (GlcNAc...) asparagine glycosylation sites follow: N2885 and N2889. Cystine bridges form between C2898/C2921 and C2949/C2973. N-linked (GlcNAc...) asparagine glycans are attached at residues N2960, N2965, and N2982. An intrachain disulfide couples C3011 to C3039. N-linked (GlcNAc...) asparagine glycans are attached at residues N3040 and N3074. Disulfide bonds link C3070–C3092 and C3130–C3157. Residue N3160 is glycosylated (N-linked (GlcNAc...) asparagine). 4 cysteine pairs are disulfide-bonded: C3184–C3207, C3249–C3278, C3305–C3327, and C3368–C3402. N3256 carries N-linked (GlcNAc...) asparagine glycosylation. N3427 is a glycosylation site (N-linked (GlcNAc...) asparagine). C3430 and C3475 form a disulfide bridge. Residues N3543, N3572, and N3645 are each glycosylated (N-linked (GlcNAc...) asparagine). 3 disulfide bridges follow: C3560-C3579, C3623-C3649, and C3676-C3699.

As to expression, specifically expressed in nephrocytes.

The protein localises to the cell membrane. Functionally, required in the nephrocyte for normal uptake of proteins and elimination of toxins, and for maintenance of endocytic trafficking structures. May function together with Amnionless. This is Cubilin homolog from Drosophila melanogaster (Fruit fly).